A 327-amino-acid polypeptide reads, in one-letter code: UPF0665 family protein C23C4.06c (327 aa).

This sequence belongs to the UPF0665 family.

The protein resides in the cytoplasm. Its subcellular location is the nucleus. The sequence is that of UPF0665 family protein C23C4.06c from Schizosaccharomyces pombe (strain 972 / ATCC 24843) (Fission yeast).